The sequence spans 373 residues: Centrosomal protein of 41 kDa (373 aa).

The disordered stretch occupies residues 89-127 (QRLEDNDSATSEPDAEITAKTNGNGSPGEQSPSPVQFIN). Residues Ser96 and Ser99 each carry the phosphoserine modification. A compositionally biased stretch (polar residues) spans 107-127 (AKTNGNGSPGEQSPSPVQFIN). Thr109 carries the post-translational modification Phosphothreonine. Phosphoserine occurs at positions 114 and 121. Residues 169-266 (PDCPFLLLDV…LAQKFPEGLI (98 aa)) enclose the Rhodanese domain. Disordered stretches follow at residues 275-300 (QQAL…ENKW) and 315-373 (EEDQ…KPWK). Arg343 carries the post-translational modification Omega-N-methylarginine.

It belongs to the CEP41 family. As to quaternary structure, found in a complex with TTLL6.

Its subcellular location is the cytoplasm. The protein resides in the cytoskeleton. It localises to the microtubule organizing center. It is found in the centrosome. The protein localises to the cell projection. Its subcellular location is the cilium. The protein resides in the cilium basal body. In terms of biological role, required during ciliogenesis for tubulin glutamylation in cilium. Probably acts by participating in the transport of TTLL6, a tubulin polyglutamylase, between the basal body and the cilium. The polypeptide is Centrosomal protein of 41 kDa (CEP41) (Bos taurus (Bovine)).